A 165-amino-acid polypeptide reads, in one-letter code: Chorismate pyruvate-lyase (165 aa).

The substrate site is built by Met-35, Arg-77, Leu-115, and Glu-156.

This sequence belongs to the UbiC family. In terms of assembly, monomer.

The protein localises to the cytoplasm. It catalyses the reaction chorismate = 4-hydroxybenzoate + pyruvate. It participates in cofactor biosynthesis; ubiquinone biosynthesis. Its function is as follows. Removes the pyruvyl group from chorismate, with concomitant aromatization of the ring, to provide 4-hydroxybenzoate (4HB) for the ubiquinone pathway. The sequence is that of Chorismate pyruvate-lyase from Salmonella agona (strain SL483).